The following is a 396-amino-acid chain: Trypacidin cluster transcription factor (396 aa).

Residues 20–47 (CRACGLSKVRCSKEKPTCSRCRRRGTVC) constitute a DNA-binding region (zn(2)-C6 fungal-type). 3 disordered regions span residues 54 to 120 (RPGR…LSTV), 190 to 218 (DPAP…ESEA), and 346 to 365 (MHGA…PAPL). Residues 57–71 (RKPDSRSEVEPEPGH) show a composition bias toward basic and acidic residues. Positions 72–82 (LSHPLPSPESS) are enriched in low complexity.

In terms of tissue distribution, specifically expressed in conidia.

It localises to the nucleus. Transcription factor that regulates the expression of the gene clusters that mediate the biosynthesis of trypacidin, a metabolite with antiprotozoal activity and a possible role in the infection process. Trypacidin is toxic for human pulmonary and bronchial epithelial cells by initiating the intracellular formation of nitric oxide (NO) and hydrogen peroxide (H(2)O(2)), thus triggering host necrotic cell death. The polypeptide is Trypacidin cluster transcription factor (Aspergillus fumigatus (strain ATCC MYA-4609 / CBS 101355 / FGSC A1100 / Af293) (Neosartorya fumigata)).